The sequence spans 163 residues: MSTADRYRKVFPVTWEQLHRDAKALSWRLLEKGPYKGIIAIARGGLVPAAVIARELDIHLVETICISSYQWQEQTSSHKVLKTVEGRGEGWLIIDDLADTGGTARLVREMLPEAHFATVYAKPAGRPLVDTFITEVSQDTWILFPWDSEVQYVVPLVNQPQQS.

Residues 43 to 44 (RG) and 95 to 103 (DDLADTGGT) contribute to the 5-phospho-alpha-D-ribose 1-diphosphate site. Asp-96 serves as a coordination point for Mg(2+). Guanine-binding residues include Asp-99 and Ile-142. Positions 99 and 142 each coordinate xanthine. GMP-binding positions include 99-103 (DTGGT) and 141-142 (WI).

The protein belongs to the purine/pyrimidine phosphoribosyltransferase family. XGPT subfamily. In terms of assembly, homotetramer. Mg(2+) is required as a cofactor.

Its subcellular location is the cell inner membrane. It catalyses the reaction GMP + diphosphate = guanine + 5-phospho-alpha-D-ribose 1-diphosphate. It carries out the reaction XMP + diphosphate = xanthine + 5-phospho-alpha-D-ribose 1-diphosphate. The catalysed reaction is IMP + diphosphate = hypoxanthine + 5-phospho-alpha-D-ribose 1-diphosphate. It participates in purine metabolism; GMP biosynthesis via salvage pathway; GMP from guanine: step 1/1. The protein operates within purine metabolism; XMP biosynthesis via salvage pathway; XMP from xanthine: step 1/1. Functionally, purine salvage pathway enzyme that catalyzes the transfer of the ribosyl-5-phosphate group from 5-phospho-alpha-D-ribose 1-diphosphate (PRPP) to the N9 position of the 6-oxopurines guanine and xanthine to form the corresponding ribonucleotides GMP (guanosine 5'-monophosphate) and XMP (xanthosine 5'-monophosphate), with the release of PPi. To a lesser extent, also acts on hypoxanthine. This Nitratidesulfovibrio vulgaris (strain ATCC 29579 / DSM 644 / CCUG 34227 / NCIMB 8303 / VKM B-1760 / Hildenborough) (Desulfovibrio vulgaris) protein is Xanthine-guanine phosphoribosyltransferase.